The chain runs to 287 residues: Protease HtpX (287 aa).

A run of 2 helical transmembrane segments spans residues 4–24 (IFLL…VMSI) and 33–53 (GGLL…SLAI). Histidine 139 lines the Zn(2+) pocket. The active site involves glutamate 140. A Zn(2+)-binding site is contributed by histidine 143. Transmembrane regions (helical) follow at residues 154 to 174 (LIQG…AGII) and 195 to 215 (AVVF…VAYF). Residue glutamate 220 coordinates Zn(2+).

This sequence belongs to the peptidase M48B family. Zn(2+) serves as cofactor.

Its subcellular location is the cell inner membrane. In Shewanella halifaxensis (strain HAW-EB4), this protein is Protease HtpX.